A 380-amino-acid chain; its full sequence is Tryptophan 2,3-dioxygenase (380 aa).

Residues 57–61 (FIITH) and Arg128 contribute to the substrate site. His313 is a binding site for heme. A substrate-binding site is contributed by Thr328.

The protein belongs to the tryptophan 2,3-dioxygenase family. Homotetramer. Dimer of dimers. It depends on heme as a cofactor.

The enzyme catalyses L-tryptophan + O2 = N-formyl-L-kynurenine. It functions in the pathway amino-acid degradation; L-tryptophan degradation via kynurenine pathway; L-kynurenine from L-tryptophan: step 1/2. Its pathway is pigment biosynthesis; ommochrome biosynthesis. Heme-dependent dioxygenase that catalyzes the oxidative cleavage of the L-tryptophan (L-Trp) pyrrole ring and converts L-tryptophan to N-formyl-L-kynurenine. Catalyzes the oxidative cleavage of the indole moiety. The sequence is that of Tryptophan 2,3-dioxygenase from Drosophila willistoni (Fruit fly).